The following is an 889-amino-acid chain: Chitin synthase I (889 aa).

Asn-43 carries an N-linked (GlcNAc...) asparagine glycan. Residues 94–138 (GEYFDGYNQGHPPQEHQAYDDDGQPLIEDQHGYSDNPQHQTQTPA) are disordered. Residues 126–137 (YSDNPQHQTQTP) show a composition bias toward polar residues. Residue Asn-199 is glycosylated (N-linked (GlcNAc...) asparagine). 9 helical membrane passes run 431 to 451 (SAFG…YVAL), 530 to 550 (RWLN…YEFF), 560 to 580 (LAFF…WFAI), 606 to 626 (ILGV…FVLS), 641 to 661 (MVWF…FIAV), 687 to 707 (TLII…IIMF), 716 to 736 (FIQY…YAFC), 815 to 835 (GVVL…LSSA), and 861 to 881 (IVLW…MWFL).

Belongs to the chitin synthase family. Class I subfamily. As to expression, expressed in hyphal bodies.

Its subcellular location is the cell membrane. The catalysed reaction is [(1-&gt;4)-N-acetyl-beta-D-glucosaminyl](n) + UDP-N-acetyl-alpha-D-glucosamine = [(1-&gt;4)-N-acetyl-beta-D-glucosaminyl](n+1) + UDP + H(+). In terms of biological role, polymerizes chitin, a structural polymer of the cell wall and septum, by transferring the sugar moiety of UDP-GlcNAc to the non-reducing end of the growing chitin polymer. Contributes to the production of conidia and the ability of fungal conidia to germinate. Not involved in fungal stress tolerances. The protein is Chitin synthase I of Metarhizium acridum (strain CQMa 102).